A 393-amino-acid polypeptide reads, in one-letter code: G protein-activated inward rectifier potassium channel 3 (393 aa).

The disordered stretch occupies residues 1-23 (MAQENAAFSPGSEEPPRRRGRQR). Residues 1-57 (MAQENAAFSPGSEEPPRRRGRQRYVEKDGRCNVQQGNVRETYRYLTDLFTTLVDLQW) lie on the Cytoplasmic side of the membrane. The helical transmembrane segment at 58–82 (RLSLLFFVLAYALTWLFFGAIWWLI) threads the bilayer. At 83–106 (AYGRGDLEHLEDTAWTPCVNNLNG) the chain is on the extracellular side. An intramembrane region (helical; Pore-forming) is located at residues 107 to 118 (FVAAFLFSIETE). The segment at residues 119–125 (TTIGYGH) is an intramembrane region (pore-forming). Positions 120–125 (TIGYGH) match the Selectivity filter motif. The Extracellular segment spans residues 126–134 (RVITDQCPE). The helical transmembrane segment at 135 to 156 (GIVLLLLQAILGSMVNAFMVGC) threads the bilayer. Residues 157–393 (MFVKISQPNK…LPPPESESKV (237 aa)) are Cytoplasmic-facing. Positions 360 to 393 (KVEEEGAGEGAGAGDGADKEQNGCLPPPESESKV) are disordered. The span at 384 to 393 (LPPPESESKV) shows a compositional bias: pro residues. Positions 390-393 (ESKV) match the PDZ-binding motif.

The protein belongs to the inward rectifier-type potassium channel (TC 1.A.2.1) family. KCNJ9 subfamily. As to quaternary structure, associates with KCNJ3/GIRK1 to form a G-protein-activated heteromultimer pore-forming unit. Interacts (via PDZ-binding motif) with SNX27 (via PDZ domain); the interaction is required when endocytosed to prevent degradation in lysosomes and promote recycling to the plasma membrane.

Its subcellular location is the membrane. It catalyses the reaction K(+)(in) = K(+)(out). Its function is as follows. This receptor is controlled by G proteins. Inward rectifier potassium channels are characterized by a greater tendency to allow potassium to flow into the cell rather than out of it. Their voltage dependence is regulated by the concentration of extracellular potassium; as external potassium is raised, the voltage range of the channel opening shifts to more positive voltages. The inward rectification is mainly due to the blockage of outward current by internal magnesium. Unable to produce channel activity when expressed alone but forms a functional channel in association with KCNJ3/GIRK1. This Rattus norvegicus (Rat) protein is G protein-activated inward rectifier potassium channel 3 (Kcnj9).